Consider the following 354-residue polypeptide: Chorismate synthase (354 aa).

Position 48 (arginine 48) interacts with NADP(+). Residues arginine 125–serine 127, alanine 280, lysine 295–serine 299, and arginine 321 each bind FMN.

This sequence belongs to the chorismate synthase family. Homotetramer. The cofactor is FMNH2.

The catalysed reaction is 5-O-(1-carboxyvinyl)-3-phosphoshikimate = chorismate + phosphate. Its pathway is metabolic intermediate biosynthesis; chorismate biosynthesis; chorismate from D-erythrose 4-phosphate and phosphoenolpyruvate: step 7/7. In terms of biological role, catalyzes the anti-1,4-elimination of the C-3 phosphate and the C-6 proR hydrogen from 5-enolpyruvylshikimate-3-phosphate (EPSP) to yield chorismate, which is the branch point compound that serves as the starting substrate for the three terminal pathways of aromatic amino acid biosynthesis. This reaction introduces a second double bond into the aromatic ring system. This Syntrophus aciditrophicus (strain SB) protein is Chorismate synthase.